The primary structure comprises 221 residues: ASINYTYIIYVIGVITILYASFSTLRTIDIKELIAYSSVSHAAVYLIGAFSNTIQGIEGSIALGLAHGFVSSGLFICAGGILYDRSSTRLITYYRGMAQIMPIFSVLFFILALGNSGTPLTLNFIGEFMSLYGVFERMPILGVLASTSIVFSAAYTIFMYNRIVFGGSYSIYFRENIGDVTRREFIMLLVFVILTVLFGIYPAPILDGLHYSVSYLIYNIN.

6 helical membrane-spanning segments follow: residues 5-25 (YTYI…FSTL), 34-54 (IAYS…SNTI), 61-81 (IALG…AGGI), 100-120 (IMPI…GTPL), 140-160 (ILGV…IFMY), and 185-205 (FIML…PAPI).

It belongs to the complex I subunit 4 family.

The protein resides in the mitochondrion membrane. The enzyme catalyses a ubiquinone + NADH + 5 H(+)(in) = a ubiquinol + NAD(+) + 4 H(+)(out). Core subunit of the mitochondrial membrane respiratory chain NADH dehydrogenase (Complex I) that is believed to belong to the minimal assembly required for catalysis. Complex I functions in the transfer of electrons from NADH to the respiratory chain. The immediate electron acceptor for the enzyme is believed to be ubiquinone. This chain is NADH-ubiquinone oxidoreductase chain 4 (nd4), found in Emericella nidulans (Aspergillus nidulans).